Here is an 811-residue protein sequence, read N- to C-terminus: Exocyst complex component 6B (811 aa).

A coiled-coil region spans residues 50–119 (MEKLETRIRN…LVIAMEELKQ (70 aa)). The segment at 260–280 (STSPKSEQDSGILDVEDEEDD) is disordered.

Belongs to the SEC15 family. As to quaternary structure, the exocyst complex is composed of SEC3, SEC5, SEC6, SEC8, SEC10, SEC15, EXO70 and EXO84.

Its function is as follows. Component of the exocyst complex involved in the docking of exocytic vesicles with fusion sites on the plasma membrane. The polypeptide is Exocyst complex component 6B (EXOC6B) (Homo sapiens (Human)).